Reading from the N-terminus, the 142-residue chain is gSG7 salivary protein (142 aa).

Positions 1 to 26 (MAVRMTVILPLAMALICLMQAEPATA) are cleaved as a signal peptide. Cystine bridges form between cysteine 84-cysteine 139 and cysteine 107-cysteine 117.

Associates with activated host C3-convertase complex C3bBb (C3-CFB). Interacts with host properdin (CFP), a regulator of the alternate pathway of complement. Female salivary gland (at protein level).

The protein resides in the secreted. In terms of biological role, salivary protein that potently inhibits the alternative pathway of complement system activation in the host while having no inhibitory effect on the classical or lectin pathways. Binds and stabilizes activated host C3-convertase complex C3bBb (C3-CFB) and inhibits its convertase activity. Enhances accumulation of C3bBb on immobilized properdin. This chain is gSG7 salivary protein, found in Anopheles albimanus (New world malaria mosquito).